The sequence spans 367 residues: Lipoyl synthase 2, chloroplastic (367 aa).

The [4Fe-4S] cluster site is built by Cys-84, Cys-89, Cys-95, Cys-121, Cys-125, Cys-128, and Ser-336. The 222-residue stretch at 104–325 (GEGDGIATAT…KEYGESVGFR (222 aa)) folds into the Radical SAM core domain.

This sequence belongs to the radical SAM superfamily. Lipoyl synthase family. Requires [4Fe-4S] cluster as cofactor.

Its subcellular location is the plastid. The protein localises to the chloroplast. It catalyses the reaction [[Fe-S] cluster scaffold protein carrying a second [4Fe-4S](2+) cluster] + N(6)-octanoyl-L-lysyl-[protein] + 2 oxidized [2Fe-2S]-[ferredoxin] + 2 S-adenosyl-L-methionine + 4 H(+) = [[Fe-S] cluster scaffold protein] + N(6)-[(R)-dihydrolipoyl]-L-lysyl-[protein] + 4 Fe(3+) + 2 hydrogen sulfide + 2 5'-deoxyadenosine + 2 L-methionine + 2 reduced [2Fe-2S]-[ferredoxin]. It participates in protein modification; protein lipoylation via endogenous pathway; protein N(6)-(lipoyl)lysine from octanoyl-[acyl-carrier-protein]: step 2/2. Functionally, catalyzes the radical-mediated insertion of two sulfur atoms into the C-6 and C-8 positions of the octanoyl moiety bound to the lipoyl domains of lipoate-dependent enzymes, thereby converting the octanoylated domains into lipoylated derivatives. This Zea mays (Maize) protein is Lipoyl synthase 2, chloroplastic.